The following is a 174-amino-acid chain: Crossover junction endodeoxyribonuclease RuvC (174 aa).

Residues D8, E69, and D141 contribute to the active site. Mg(2+)-binding residues include D8, E69, and D141.

It belongs to the RuvC family. As to quaternary structure, homodimer which binds Holliday junction (HJ) DNA. The HJ becomes 2-fold symmetrical on binding to RuvC with unstacked arms; it has a different conformation from HJ DNA in complex with RuvA. In the full resolvosome a probable DNA-RuvA(4)-RuvB(12)-RuvC(2) complex forms which resolves the HJ. The cofactor is Mg(2+).

Its subcellular location is the cytoplasm. The catalysed reaction is Endonucleolytic cleavage at a junction such as a reciprocal single-stranded crossover between two homologous DNA duplexes (Holliday junction).. Functionally, the RuvA-RuvB-RuvC complex processes Holliday junction (HJ) DNA during genetic recombination and DNA repair. Endonuclease that resolves HJ intermediates. Cleaves cruciform DNA by making single-stranded nicks across the HJ at symmetrical positions within the homologous arms, yielding a 5'-phosphate and a 3'-hydroxyl group; requires a central core of homology in the junction. The consensus cleavage sequence is 5'-(A/T)TT(C/G)-3'. Cleavage occurs on the 3'-side of the TT dinucleotide at the point of strand exchange. HJ branch migration catalyzed by RuvA-RuvB allows RuvC to scan DNA until it finds its consensus sequence, where it cleaves and resolves the cruciform DNA. This Xanthomonas oryzae pv. oryzae (strain PXO99A) protein is Crossover junction endodeoxyribonuclease RuvC.